The chain runs to 129 residues: MAKEAARVRRRERKNISSGVAHVNSTFNNTMITITDAQGNAIAWSSAGAQGFKGSRKSTPFAAQVAAEDCARKAQEHGMRTLEVEVSGPGSGRESALRALQAAGFTITSIRDVTPIPHNGCRPRKKRRV.

It belongs to the universal ribosomal protein uS11 family. As to quaternary structure, part of the 30S ribosomal subunit. Interacts with proteins S7 and S18. Binds to IF-3.

Located on the platform of the 30S subunit, it bridges several disparate RNA helices of the 16S rRNA. Forms part of the Shine-Dalgarno cleft in the 70S ribosome. This is Small ribosomal subunit protein uS11 from Chelativorans sp. (strain BNC1).